The following is a 104-amino-acid chain: UPF0147 protein MK1586 (104 aa).

This sequence belongs to the UPF0147 family.

This chain is UPF0147 protein MK1586, found in Methanopyrus kandleri (strain AV19 / DSM 6324 / JCM 9639 / NBRC 100938).